The primary structure comprises 264 residues: tRNA pseudouridine synthase A (264 aa).

Asp-52 functions as the Nucleophile in the catalytic mechanism. Tyr-110 is a binding site for substrate.

It belongs to the tRNA pseudouridine synthase TruA family. In terms of assembly, homodimer.

The catalysed reaction is uridine(38/39/40) in tRNA = pseudouridine(38/39/40) in tRNA. Its function is as follows. Formation of pseudouridine at positions 38, 39 and 40 in the anticodon stem and loop of transfer RNAs. The protein is tRNA pseudouridine synthase A of Wigglesworthia glossinidia brevipalpis.